The following is a 156-amino-acid chain: Probable cyclic pyranopterin monophosphate synthase (156 aa).

Substrate is bound by residues 74–76 (MCH) and 110–111 (ME). Asp125 is an active-site residue.

This sequence belongs to the MoaC family. Homohexamer; trimer of dimers.

It catalyses the reaction (8S)-3',8-cyclo-7,8-dihydroguanosine 5'-triphosphate = cyclic pyranopterin phosphate + diphosphate. The protein operates within cofactor biosynthesis; molybdopterin biosynthesis. Its function is as follows. Catalyzes the conversion of (8S)-3',8-cyclo-7,8-dihydroguanosine 5'-triphosphate to cyclic pyranopterin monophosphate (cPMP). The polypeptide is Probable cyclic pyranopterin monophosphate synthase (Methanospirillum hungatei JF-1 (strain ATCC 27890 / DSM 864 / NBRC 100397 / JF-1)).